We begin with the raw amino-acid sequence, 479 residues long: MQNLGASMDNNKKFKVVIVGGSIAGLTLAHCLSKFGIDYVVLEKRREIAPQEGASVGIMPNGGRVLEQLGLFDDVERAIEPLSVAQLVYPDGFCSESEYPKKLCERFGFPLAFLDRQMLLESLYANLPDITRVKTNSAVIAVEHEDDRVRVLTTDNCSYEGHLVVGADGIHSTIRKEMWRAASSLHQGQVEDTNSMMNITYACVYGISSAHPLLKPGQQITCFNDGWSILSVVGKNGRTFWFLFLKLEREYKYNEAPKYTKEDAIANCDRLSAHTFWDTVTFGDVWSRREVFTMTPLEEGVFEQWSCGRIVCIGDSMHKFAPNIGQGANCAIEDAGELANALARIFNDREKGDGFKPSTPDLSNMLEQFQGKRISRIKALYKVARLAIRLQARDGLAMTLMGRYVMPYLGDKVADWASRDIADGAILEFLPPPERSGSGWQKYSQKSKKSNTPFILAVLAGLGFLLTMFKQQWEYHQDS.

3 residues coordinate FAD: glutamate 43, glycine 57, and arginine 116. N-linked (GlcNAc...) asparagine glycosylation is found at asparagine 156 and asparagine 198. Positions 315 and 328 each coordinate FAD. The helical transmembrane segment at 453–473 (PFILAVLAGLGFLLTMFKQQW) threads the bilayer.

Belongs to the paxM FAD-dependent monooxygenase family. Requires FAD as cofactor.

It is found in the membrane. It catalyses the reaction verruculide C + AH2 + O2 = verruculide C epoxide + A + H2O. Its pathway is secondary metabolite biosynthesis; terpenoid biosynthesis. Functionally, FAD-dependent monooxygenase; part of the gene cluster that mediates the biosynthesis of chrodrimanin B, a meroterpenoid that acts as a potent blocker of insect GABA-gated chloride channels. The first step of the pathway is the biosynthesis of 6-hydroxymellein by the polyketide synthase cdmE. The prenyltransferase cdmH acts as a 6-hydroxymellein 5-farnesyltransferase and produces the hydrophobic metabolite verruculide C. The FAD-dependent monooxygenase cdmI further converts verruculide C into verruculide B. The terpene cyclase cdmG then produced the pentacyclic molecule 3-hydroxypentacecilide A, the backbone structure of chrodrimanin B, via folding the farnesyl moiety of the substrate into the chair-boat conformation. The short-chain dehydrogenase/reductase cdmF functions as the 3-OH dehydrogenase that oxidizes the C-3 hydroxyl group of 3-hydroxypentacecilide A and produces chrodrimanin C, the dehydrogenated product of 3-hydroxypentacecilide A. The cytochrome P450 monooxygenase cdmJ then accepts both 3-hydroxypentacecilide A and chrodrimanin C and functions as a C-7-beta-hydroxylase to produce respectively chrodrimanin H and chrodrimanin F. The dioxygenase cdmA accepts chrodrimanin H to afford chrodrimanin E, which is further transformed to chrodrimanin A by the dioxygenase cdmD. CdmA can also accept chrodrimanin C as substrate to convert it into verruculide A, which is further converted into chrodrimanin T by cdmD. The last step of the biosynthesis is proposed to be performed by the acetyltransferase cdmC which acetylates chrodrimanin A to yield chrodrimanin B. The pathway may also lead to the production of additional shunt products, including chrodrimanins T and U. This chain is FAD-dependent monooxygenase cdmI, found in Talaromyces verruculosus (Penicillium verruculosum).